Reading from the N-terminus, the 176-residue chain is NAD(P)H-quinone oxidoreductase subunit 6, chloroplastic (176 aa).

A run of 5 helical transmembrane segments spans residues 10-30 (FLLV…VLLT), 32-52 (PIFS…FYIL), 61-81 (AQLL…VMFM), 95-115 (VGNG…ITII), and 152-172 (FFLP…GAIA).

Belongs to the complex I subunit 6 family. NDH is composed of at least 16 different subunits, 5 of which are encoded in the nucleus.

It is found in the plastid. Its subcellular location is the chloroplast thylakoid membrane. The enzyme catalyses a plastoquinone + NADH + (n+1) H(+)(in) = a plastoquinol + NAD(+) + n H(+)(out). It catalyses the reaction a plastoquinone + NADPH + (n+1) H(+)(in) = a plastoquinol + NADP(+) + n H(+)(out). In terms of biological role, NDH shuttles electrons from NAD(P)H:plastoquinone, via FMN and iron-sulfur (Fe-S) centers, to quinones in the photosynthetic chain and possibly in a chloroplast respiratory chain. The immediate electron acceptor for the enzyme in this species is believed to be plastoquinone. Couples the redox reaction to proton translocation, and thus conserves the redox energy in a proton gradient. This is NAD(P)H-quinone oxidoreductase subunit 6, chloroplastic (ndhG) from Populus alba (White poplar).